The chain runs to 459 residues: ATP synthase subunit beta (459 aa).

Residue 147–154 coordinates ATP; the sequence is GGAGVGKT.

It belongs to the ATPase alpha/beta chains family. F-type ATPases have 2 components, CF(1) - the catalytic core - and CF(0) - the membrane proton channel. CF(1) has five subunits: alpha(3), beta(3), gamma(1), delta(1), epsilon(1). CF(0) has three main subunits: a(1), b(2) and c(9-12). The alpha and beta chains form an alternating ring which encloses part of the gamma chain. CF(1) is attached to CF(0) by a central stalk formed by the gamma and epsilon chains, while a peripheral stalk is formed by the delta and b chains.

It localises to the cell inner membrane. The enzyme catalyses ATP + H2O + 4 H(+)(in) = ADP + phosphate + 5 H(+)(out). In terms of biological role, produces ATP from ADP in the presence of a proton gradient across the membrane. The catalytic sites are hosted primarily by the beta subunits. The chain is ATP synthase subunit beta from Hydrogenovibrio crunogenus (strain DSM 25203 / XCL-2) (Thiomicrospira crunogena).